The sequence spans 288 residues: Rhox homeobox family member 2B (288 aa).

The tract at residues Ser16–Pro136 is disordered. Over residues Val39–Pro48 the composition is skewed to acidic residues. A compositionally biased stretch (basic and acidic residues) spans Gly68 to Gly80. The segment at residues Gln134 to Gln193 is a DNA-binding region (homeobox). Positions Arg186 to Ala195 match the Nuclear localization signal motif.

This sequence belongs to the paired-like homeobox family. PEPP subfamily. In terms of tissue distribution, expressed in testis, mainly expressed in germ cells, but also detected in somatic cells such as Sertoli cells, Leydig cells and peritubular cells.

Its subcellular location is the nucleus. In terms of biological role, transcription factor maybe involved in reproductive processes. Modulates expression of target genes encoding proteins involved in processes relevant to spermatogenesis. This Homo sapiens (Human) protein is Rhox homeobox family member 2B.